The following is a 799-amino-acid chain: Protein scabrous (799 aa).

Residues 1-51 form the signal peptide; the sequence is MRDWQTFPDLQKKKVSRDHLNCPATMAGSNVLWPILLAVVLLQISVAFVSG. The segment at 287-316 is disordered; that stretch reads TRKDGSSASVEEESGSQEANQEQTGLETTA. Asn372 carries an N-linked (GlcNAc...) asparagine glycan. Residues 489 to 498 are compositionally biased toward basic residues; it reads LNKPHKRPHH. The tract at residues 489–509 is disordered; sequence LNKPHKRPHHQNVQAQMPQDD. The 205-residue stretch at 533–737 folds into the Fibrinogen C-terminal domain; the sequence is AIINKLPHDC…SSRMLVKRLP (205 aa). The cysteines at positions 542 and 568 are disulfide-linked. Asn587, Asn618, and Asn660 each carry an N-linked (GlcNAc...) asparagine glycan. A disulfide bond links Cys687 and Cys700. N-linked (GlcNAc...) asparagine glycosylation is found at Asn744 and Asn787.

In terms of processing, possesses five pairs of dibasic residues that may be the target of proteolytic processing.

Its subcellular location is the late endosome. In terms of biological role, involved in regulation of neurogenesis. May encode a lateral inhibitor of R8 differentiation. In conjunction with Gp150, promotes Notch activation in response to Delta by regulating acquisition of insensitivity to Delta in a subset of cells. The protein is Protein scabrous (sca) of Drosophila melanogaster (Fruit fly).